The chain runs to 176 residues: Large ribosomal subunit protein uL16 (176 aa).

Belongs to the universal ribosomal protein uL16 family.

This Halorubrum lacusprofundi (strain ATCC 49239 / DSM 5036 / JCM 8891 / ACAM 34) protein is Large ribosomal subunit protein uL16.